A 469-amino-acid chain; its full sequence is MSEDLSMKCGLEIHVQVDTNSKLFCQCPTNYKDVEPNTNICPVCIGHPGAKPMPPNKKAIDMAIMVAKMLGCEMVIDKDIYFQRKHYNYPDLPSGYQKTSVPIGEHGKFLGVGITEVHLEEDPGQYKPDLGTVDYNRSGTPLIEIVTDPDMKSPEEAREFLRQLLRLFRYIGNLRGEGTMRADTNISIKYNGIQGNRVEVKNVNSIRGVYKVLKYELIRQKNVLRRGGEIKLETRAFMESQMITKGMRSKETADDYRYIPDPDLQPIVLSNEWVEKVEAQMPETPMNKEKRFVEQYGIKEDDAKVLVSDLELADVFEKVVAELGNDKDGISLAVTWIRNELKRVLVYNKLEFFETNLKPEHMVELINSIKDKTISQKIGKTIIEQMVEYKGEKTPKELINEMGLTVIEDTSELEKACEEAIKNSDKAIEDYKSGNQRALNSVVGQVMKLTRGRAEPATVVEILKKKIDG.

This sequence belongs to the GatB/GatE family. GatB subfamily. Heterotrimer of A, B and C subunits.

It catalyses the reaction L-glutamyl-tRNA(Gln) + L-glutamine + ATP + H2O = L-glutaminyl-tRNA(Gln) + L-glutamate + ADP + phosphate + H(+). The enzyme catalyses L-aspartyl-tRNA(Asn) + L-glutamine + ATP + H2O = L-asparaginyl-tRNA(Asn) + L-glutamate + ADP + phosphate + 2 H(+). Functionally, allows the formation of correctly charged Asn-tRNA(Asn) or Gln-tRNA(Gln) through the transamidation of misacylated Asp-tRNA(Asn) or Glu-tRNA(Gln) in organisms which lack either or both of asparaginyl-tRNA or glutaminyl-tRNA synthetases. The reaction takes place in the presence of glutamine and ATP through an activated phospho-Asp-tRNA(Asn) or phospho-Glu-tRNA(Gln). In Methanococcus maripaludis (strain C6 / ATCC BAA-1332), this protein is Aspartyl/glutamyl-tRNA(Asn/Gln) amidotransferase subunit B.